Consider the following 339-residue polypeptide: Protein-arginine kinase (339 aa).

Residues 14–242 (IVINSNISLS…LNVISEEKKF (229 aa)) enclose the Phosphagen kinase C-terminal domain. ATP is bound by residues 17–21 (NSNIS), 164–168 (RASVN), and 195–200 (KGLYEE).

It belongs to the ATP:guanido phosphotransferase family.

The catalysed reaction is L-arginyl-[protein] + ATP = N(omega)-phospho-L-arginyl-[protein] + ADP + H(+). Catalyzes the specific phosphorylation of arginine residues in proteins. The protein is Protein-arginine kinase of Clostridium botulinum (strain Eklund 17B / Type B).